The chain runs to 379 residues: Carbamoyl phosphate synthase small chain (379 aa).

Residues 1 to 184 (MVSLYLENGL…LDYKPFDEKN (184 aa)) form a CPSase region. Positions 44, 240, and 242 each coordinate L-glutamine. Residues 188-378 (TIAVLDFGAK…VKLLENFPTR (191 aa)) enclose the Glutamine amidotransferase type-1 domain. The Nucleophile role is filled by Cys-268. Residues Leu-269, Gln-272, Asn-310, and Tyr-313 each coordinate L-glutamine. Catalysis depends on residues His-351 and Glu-353.

The protein belongs to the CarA family. Composed of two chains; the small (or glutamine) chain promotes the hydrolysis of glutamine to ammonia, which is used by the large (or ammonia) chain to synthesize carbamoyl phosphate. Tetramer of heterodimers (alpha,beta)4.

It catalyses the reaction hydrogencarbonate + L-glutamine + 2 ATP + H2O = carbamoyl phosphate + L-glutamate + 2 ADP + phosphate + 2 H(+). It carries out the reaction L-glutamine + H2O = L-glutamate + NH4(+). The protein operates within amino-acid biosynthesis; L-arginine biosynthesis; carbamoyl phosphate from bicarbonate: step 1/1. It participates in pyrimidine metabolism; UMP biosynthesis via de novo pathway; (S)-dihydroorotate from bicarbonate: step 1/3. In terms of biological role, small subunit of the glutamine-dependent carbamoyl phosphate synthetase (CPSase). CPSase catalyzes the formation of carbamoyl phosphate from the ammonia moiety of glutamine, carbonate, and phosphate donated by ATP, constituting the first step of 2 biosynthetic pathways, one leading to arginine and/or urea and the other to pyrimidine nucleotides. The small subunit (glutamine amidotransferase) binds and cleaves glutamine to supply the large subunit with the substrate ammonia. This chain is Carbamoyl phosphate synthase small chain, found in Helicobacter acinonychis (strain Sheeba).